A 225-amino-acid chain; its full sequence is tRNA (guanine-N(1)-)-methyltransferase (225 aa).

S-adenosyl-L-methionine is bound by residues Gly-110 and 130–135 (VGDYVL).

This sequence belongs to the RNA methyltransferase TrmD family. In terms of assembly, homodimer.

Its subcellular location is the cytoplasm. It carries out the reaction guanosine(37) in tRNA + S-adenosyl-L-methionine = N(1)-methylguanosine(37) in tRNA + S-adenosyl-L-homocysteine + H(+). In terms of biological role, specifically methylates guanosine-37 in various tRNAs. This Neorickettsia sennetsu (strain ATCC VR-367 / Miyayama) (Ehrlichia sennetsu) protein is tRNA (guanine-N(1)-)-methyltransferase.